Consider the following 370-residue polypeptide: 3-isopropylmalate dehydrogenase (370 aa).

77–90 (GPKWDSVPYEVRPE) is a binding site for NAD(+). Positions 97, 107, 135, and 226 each coordinate substrate. Mg(2+)-binding residues include aspartate 226, aspartate 250, and aspartate 254. Position 290–302 (290–302 (GSAPDIAGKGIAN)) interacts with NAD(+).

Belongs to the isocitrate and isopropylmalate dehydrogenases family. LeuB type 1 subfamily. Homodimer. The cofactor is Mg(2+). It depends on Mn(2+) as a cofactor.

It localises to the cytoplasm. The catalysed reaction is (2R,3S)-3-isopropylmalate + NAD(+) = 4-methyl-2-oxopentanoate + CO2 + NADH. The protein operates within amino-acid biosynthesis; L-leucine biosynthesis; L-leucine from 3-methyl-2-oxobutanoate: step 3/4. In terms of biological role, catalyzes the oxidation of 3-carboxy-2-hydroxy-4-methylpentanoate (3-isopropylmalate) to 3-carboxy-4-methyl-2-oxopentanoate. The product decarboxylates to 4-methyl-2 oxopentanoate. The sequence is that of 3-isopropylmalate dehydrogenase from Brucella suis biovar 1 (strain 1330).